The following is a 251-amino-acid chain: uncharacterized protein (251 aa).

A signal peptide spans 1-18; the sequence is MRILIILSIILCSFFARA.

The protein belongs to the MlaA family.

This is an uncharacterized protein from Rickettsia typhi (strain ATCC VR-144 / Wilmington).